We begin with the raw amino-acid sequence, 802 residues long: Copper-exporting P-type ATPase (802 aa).

2 HMA domains span residues 5–70 and 72–138; these read KKTT…YGVA and ETVE…YDAS. 4 residues coordinate Cu(+): Cys-16, Cys-19, Cys-83, and Cys-86. The next 6 helical transmembrane spans lie at 161–181, 192–212, 224–244, 256–276, 411–431, and 438–458; these read LIIS…HLFN, WFQF…FYVG, MDVL…YEMV, LYFE…YLEA, YFVP…ITLV, and PALV…LGLA. Asp-495 acts as the 4-aspartylphosphate intermediate in catalysis. Residues Asp-690 and Asp-694 each contribute to the Mg(2+) site. A run of 2 helical transmembrane segments spans residues 748–767 and 771–790; these read LFWA…LGLL and VAGA…ALRL.

It belongs to the cation transport ATPase (P-type) (TC 3.A.3) family. Type IB subfamily.

It is found in the cell membrane. It carries out the reaction Cu(+)(in) + ATP + H2O = Cu(+)(out) + ADP + phosphate + H(+). In terms of biological role, involved in copper export. This chain is Copper-exporting P-type ATPase (copA), found in Staphylococcus aureus (strain COL).